A 244-amino-acid chain; its full sequence is Probable transcriptional regulatory protein DNO_1179 (244 aa).

It belongs to the TACO1 family.

The protein localises to the cytoplasm. The polypeptide is Probable transcriptional regulatory protein DNO_1179 (Dichelobacter nodosus (strain VCS1703A)).